The sequence spans 908 residues: NADH-quinone oxidoreductase subunit G (908 aa).

In terms of domain architecture, 2Fe-2S ferredoxin-type spans 2 to 83 (ATIHVDGKEY…GTFISIDDEE (82 aa)). C34, C45, C48, and C67 together coordinate [2Fe-2S] cluster. Positions 83 to 122 (EAKQFRESVVEWLMTNHPHDCPVCEEGGNCHLQDMTVMTG) constitute a 4Fe-4S His(Cys)3-ligated-type domain. [4Fe-4S] cluster is bound by residues H99, C103, C106, C112, C151, C154, C157, C201, C228, C231, C235, and C263. Residues 221-277 (MQFAPSICQQCSIGCNISPGERYGELRRIENRYNGTVNHYFLCDRGRFGYGYVNLKD) enclose the 4Fe-4S Mo/W bis-MGD-type domain.

This sequence belongs to the complex I 75 kDa subunit family. As to quaternary structure, composed of 13 different subunits. Subunits NuoCD, E, F, and G constitute the peripheral sector of the complex. [2Fe-2S] cluster serves as cofactor. Requires [4Fe-4S] cluster as cofactor.

It carries out the reaction a quinone + NADH + 5 H(+)(in) = a quinol + NAD(+) + 4 H(+)(out). NDH-1 shuttles electrons from NADH, via FMN and iron-sulfur (Fe-S) centers, to quinones in the respiratory chain. The immediate electron acceptor for the enzyme in this species is believed to be ubiquinone. Couples the redox reaction to proton translocation (for every two electrons transferred, four hydrogen ions are translocated across the cytoplasmic membrane), and thus conserves the redox energy in a proton gradient. The sequence is that of NADH-quinone oxidoreductase subunit G (nuoG) from Escherichia coli O6:H1 (strain CFT073 / ATCC 700928 / UPEC).